Reading from the N-terminus, the 679-residue chain is E3 ubiquitin ligase RNF157 (679 aa).

A lipid anchor (N-myristoyl glycine) is attached at Gly-2. The RING-type zinc-finger motif lies at 277-316 (CVVCLSDVRDTLILPCRHLCLCNTCADTLRYQANNCPICR). The D-box 1 signature appears at 329-332 (RKKL). 2 stretches are compositionally biased toward polar residues: residues 339-349 (SFNPIISSQTS) and 478-537 (ESEN…SMSG). Disordered regions lie at residues 339-362 (SFNP…NIPP), 416-604 (LDRL…TQEG), and 650-679 (VSRN…PLAV). The segment covering 585-598 (QDAEGNDVIEEEDG) has biased composition (acidic residues). Positions 656–659 (RRRL) match the D-box 2 motif. A phosphoserine mark is found at Ser-660, Ser-661, Ser-662, and Ser-663.

In terms of assembly, interacts with APBB1. Interacts with CHD1; CHD1-binding controls RNF157 stability. Interacts with ATRN, MEGF8, TECR, MSI2, PLRG1, BYSL, MTERF3, PSMA1, MRPS18B, PRPF4, FASTKD2, SLC25A1, SMU1, CNOT9, MRPS2, MAGT1, FXR2, EMD, PSMD8, HDAC1, RAN, HSD17B12, TXNDC5 and MRPL19. Phosphorylation at Ser-660, Ser-661, Ser-662 and Ser-663 downstream of the PI3K and MAPK pathways influences the E3 ligase activity and stability of RNF157 during the cell cycle in an anaphase-promoting complex/cyclosome-CDH1-dependent manner.

It is found in the cytoplasm. It catalyses the reaction S-ubiquitinyl-[E2 ubiquitin-conjugating enzyme]-L-cysteine + [acceptor protein]-L-lysine = [E2 ubiquitin-conjugating enzyme]-L-cysteine + N(6)-ubiquitinyl-[acceptor protein]-L-lysine.. In terms of biological role, E3 ubiquitin ligase that ubiquitinates APBB1 for its degradation by the proteasome and thus prevents apoptosis and promotes survival of neurons. Has a dual role in neurons as it is also required for dendrite growth and maintenance for which its ligase activity is not critical. May act as a scaffold molecule to regulate this process. Acts as a downstream effector of the interconnected PI3K and MAPK signaling pathways and thus participates in the regulation of the cell cycle. The polypeptide is E3 ubiquitin ligase RNF157 (RNF157) (Homo sapiens (Human)).